Here is a 315-residue protein sequence, read N- to C-terminus: Spermidine synthase 1 (315 aa).

In terms of domain architecture, PABS spans 25-262 (PGWFSEISPL…GMIGFMLCST (238 aa)). Gln56 provides a ligand contact to S-adenosyl 3-(methylsulfanyl)propylamine. Tyr86 provides a ligand contact to putrescine. S-adenosyl 3-(methylsulfanyl)propylamine-binding positions include Gln87, Asp111, Glu131, 162–163 (DG), and Asp181. Asp181 functions as the Proton acceptor in the catalytic mechanism. Putrescine is bound by residues 181–184 (DSSD) and Tyr250.

It belongs to the spermidine/spermine synthase family.

The enzyme catalyses S-adenosyl 3-(methylsulfanyl)propylamine + putrescine = S-methyl-5'-thioadenosine + spermidine + H(+). The protein operates within amine and polyamine biosynthesis; spermidine biosynthesis; spermidine from putrescine: step 1/1. The sequence is that of Spermidine synthase 1 from Hyoscyamus niger (Black henbane).